Reading from the N-terminus, the 147-residue chain is UPF0306 protein YhbP (147 aa).

The protein belongs to the UPF0306 family.

The polypeptide is UPF0306 protein YhbP (Escherichia coli O157:H7).